Reading from the N-terminus, the 453-residue chain is GTPase Der (453 aa).

EngA-type G domains follow at residues 4–169 (PIVA…PTQG) and 177–352 (TKIA…NEYQ). Residues 10-17 (GRPNVGKS), 57-61 (DTGGL), 120-123 (NKCE), 183-190 (GRPNVGKS), 230-234 (DTAGI), and 295-298 (NKWD) each bind GTP. One can recognise a KH-like domain in the interval 353–438 (RRVTTSVINE…PIRLLWRGKK (86 aa)).

It belongs to the TRAFAC class TrmE-Era-EngA-EngB-Septin-like GTPase superfamily. EngA (Der) GTPase family. In terms of assembly, associates with the 50S ribosomal subunit.

GTPase that plays an essential role in the late steps of ribosome biogenesis. The protein is GTPase Der of Trichodesmium erythraeum (strain IMS101).